The chain runs to 283 residues: MSRPEVVNSVAALRAQVSDWRRDGLRVAMVPTMGALHEGHLSLIRIAREKAERCVVSIFVNPTQFAPSEDLDKYPRQLARDLDLLARVKADLAFTPTVGAMYPAGFATRISVGGPSAGLESDFRPTFFEGVATVVAKLFLQATPDCAVFGEKDYQQLCVVRQLCRDLDLPVEIIGAPTIRDAHGLAMSSRNAYLDEAELAVARRLNVILHKAAAALAAGTHQDDATGEANRALIAAGFQKIDYVEARESLTLAPWRRDRAGRVLAAAWLGKTRLIDNVDVPVA.

Residue 33–40 coordinates ATP; sequence MGALHEGH. The active-site Proton donor is histidine 40. (R)-pantoate is bound at residue glutamine 64. Glutamine 64 provides a ligand contact to beta-alanine. 150–153 serves as a coordination point for ATP; sequence GEKD. Residue glutamine 156 participates in (R)-pantoate binding. Residues isoleucine 179 and 187–190 each bind ATP; that span reads MSSR.

This sequence belongs to the pantothenate synthetase family. In terms of assembly, homodimer.

The protein localises to the cytoplasm. It carries out the reaction (R)-pantoate + beta-alanine + ATP = (R)-pantothenate + AMP + diphosphate + H(+). It functions in the pathway cofactor biosynthesis; (R)-pantothenate biosynthesis; (R)-pantothenate from (R)-pantoate and beta-alanine: step 1/1. Functionally, catalyzes the condensation of pantoate with beta-alanine in an ATP-dependent reaction via a pantoyl-adenylate intermediate. In Mesorhizobium japonicum (strain LMG 29417 / CECT 9101 / MAFF 303099) (Mesorhizobium loti (strain MAFF 303099)), this protein is Pantothenate synthetase.